We begin with the raw amino-acid sequence, 2430 residues long: Transcription factor HIVEP2 (2430 aa).

The segment at 1-127 (MDTGDTALGQ…SLEGPPWLFP (127 aa)) is disordered. 2 stretches are compositionally biased toward polar residues: residues 11–22 (KATSRSGETDSV) and 96–110 (HSLS…QGMT). 2 consecutive C2H2-type zinc fingers follow at residues 189-211 (YICP…IRSH) and 217-239 (YPCI…RKSH). Disordered regions lie at residues 271-302 (IHSD…PPVP), 374-418 (SEKK…NTNA), and 744-995 (AHGH…SGKH). Over residues 381 to 418 (SEPSLNLLSPHSKGSTDSGYFSRSESAEQQISPPNTNA) the composition is skewed to polar residues. 2 stretches are compositionally biased toward basic and acidic residues: residues 744-753 (AHGHSDRLDP) and 775-784 (DPDKMTDLGK). Positions 792 to 804 (SVIQHTNSLSRPN) are enriched in polar residues. Phosphoserine is present on Ser811. A compositionally biased stretch (polar residues) spans 853–863 (SKPTPSQQVPQ). A compositionally biased stretch (basic and acidic residues) spans 884-908 (RVTEEPDKPEKEKEAPTKEPEKPVE). Residues 929 to 935 (PKKKRLR) carry the Nuclear localization signal motif. Phosphoserine occurs at positions 942, 947, 1040, 1431, and 1435. Positions 944–974 (GESSFESTGTGLSRSPSQESNLSHSSSFSMS) are enriched in low complexity. The disordered stretch occupies residues 1472–1584 (KKGLSRPQKP…GGQQEEEGKA (113 aa)). 2 stretches are compositionally biased toward low complexity: residues 1499–1520 (SRSS…SASG) and 1560–1569 (SDMSMSPQSS). 2 consecutive C2H2-type zinc fingers follow at residues 1783 to 1805 (YICE…IRTH) and 1811 to 1835 (YVCK…SKAH). 2 disordered regions span residues 1848–1931 (SVDD…SSLP) and 1986–2117 (FQSK…SPRR). A compositionally biased stretch (acidic residues) spans 1850–1860 (DDTETEEAENM). The span at 1861 to 1871 (EELHKTSEKHS) shows a compositional bias: basic and acidic residues. Residues 1883 to 1909 (DAEESDGEDGDDNDDDDEDDDDFDDQG) show a composition bias toward acidic residues. The segment covering 1991-2001 (TDSEPDKDRLD) has biased composition (basic and acidic residues). Residues 2013-2037 (SSEPSSSPRDFSPSSYRSSPGYDSS) are compositionally biased toward low complexity. 10 tandem repeats follow at residues 2037 to 2040 (SPCR), 2043 to 2046 (SPKR), 2055 to 2058 (SPRR), 2067 to 2070 (SPMR), 2073 to 2076 (SPRK), 2090 to 2093 (SPRR), 2096 to 2099 (SPRR), 2102 to 2105 (SPGK), 2114 to 2117 (SPRR), and 2129 to 2132 (SPRR). Residues 2037-2132 (SPCRDNSPKR…TTIRAPSPRR (96 aa)) are 10 X 4 AA tandem repeats of S-P-[RGMKC]-[RK]. A compositionally biased stretch (basic and acidic residues) spans 2062–2085 (PRRDLSPMRHLSPRKEAALRREMS). Residue Ser2102 is modified to Phosphoserine. Residues 2107-2116 (ITARRDLSPR) show a composition bias toward basic and acidic residues. 3 disordered regions span residues 2226 to 2252 (PALS…GAPG), 2268 to 2309 (KQAP…QEEN), and 2352 to 2430 (SIRH…NQLH). Positions 2271–2289 (PQVLQSSGLPSSPSSPRLL) are enriched in low complexity. Phosphoserine occurs at positions 2281 and 2285. Positions 2291-2301 (KQSTSEDSLNS) are enriched in polar residues. Basic and acidic residues predominate over residues 2371-2380 (PDLHDGEKDT). Residues 2406-2417 (FQSSKELSLSTE) show a composition bias toward polar residues. Phosphoserine occurs at positions 2413 and 2415.

As to quaternary structure, interacts with TCF4. Expressed in heart, lung, skeletal muscle and liver. In the brain expressed in cerebral cortex, hippocampus, corpora amygdala and cerebellar cortex.

The protein localises to the nucleus. Its function is as follows. Specifically binds to the DNA sequence 5'-GGGACTTTCC-3' which is found in the enhancer elements of numerous viral promoters such as those of SV40, CMV, or HIV1. In addition, related sequences are found in the enhancer elements of a number of cellular promoters, including those of the class I MHC, interleukin-2 receptor, somatostatin receptor II, and interferon-beta genes. It may act in T-cell activation. This is Transcription factor HIVEP2 (Hivep2) from Mus musculus (Mouse).